The chain runs to 190 residues: DNA-binding transcriptional repressor TetR (190 aa).

In terms of domain architecture, HTH tetR-type spans 6 to 66 (ETRSAALLAV…AALDAHDASF (61 aa)). The H-T-H motif DNA-binding region spans 29-48 (SMDSVAALAHASKTTIYRRW).

As to quaternary structure, homodimer.

Binds to its own palindromic promoter and represses transcription of its operon; addition of tetracycline or doxycycline (but not tigecycline) interferes with DNA binding. Addition of TetX to the DNA-TetR-antibiotic complex restores DNA binding. The chain is DNA-binding transcriptional repressor TetR from Mycobacteroides abscessus (strain ATCC 19977 / DSM 44196 / CCUG 20993 / CIP 104536 / JCM 13569 / NCTC 13031 / TMC 1543 / L948) (Mycobacterium abscessus).